A 1141-amino-acid chain; its full sequence is Isoleucine--tRNA ligase, cytoplasmic (1141 aa).

Residues 50–60 carry the 'HIGH' region motif; the sequence is PFATGLPHYGH. Positions 601–605 match the 'KMSKS' region motif; it reads KMSKS. Lysine 604 provides a ligand contact to ATP.

This sequence belongs to the class-I aminoacyl-tRNA synthetase family.

Its subcellular location is the cytoplasm. It catalyses the reaction tRNA(Ile) + L-isoleucine + ATP = L-isoleucyl-tRNA(Ile) + AMP + diphosphate. The chain is Isoleucine--tRNA ligase, cytoplasmic from Caenorhabditis elegans.